The primary structure comprises 339 residues: Ferrochelatase (339 aa).

The Fe cation site is built by His209 and Glu290.

The protein belongs to the ferrochelatase family.

It localises to the cytoplasm. It carries out the reaction heme b + 2 H(+) = protoporphyrin IX + Fe(2+). It functions in the pathway porphyrin-containing compound metabolism; protoheme biosynthesis; protoheme from protoporphyrin-IX: step 1/1. In terms of biological role, catalyzes the ferrous insertion into protoporphyrin IX. The protein is Ferrochelatase of Rhizobium meliloti (strain 1021) (Ensifer meliloti).